A 230-amino-acid chain; its full sequence is Voltage-gated hydrogen channel 1 (230 aa).

Topologically, residues 1–58 are cytoplasmic; the sequence is MAGCLRHFTSVGDDTKKKAWKEEDVEVAHEEEPKNTPHPFIASYSFRGALKWLFSSHK. Residues 59–79 form a helical membrane-spanning segment; sequence FQIVIICLVILDALFVLVEVL. Topologically, residues 80–96 are extracellular; the sequence is LDLELLAEKVDHIIPEI. A helical transmembrane segment spans residues 97-119; it reads FHYLSISVLSFFILEIAGKLYAF. Over 120–127 the chain is Cytoplasmic; the sequence is RLEFFHHK. Residues 128–148 form a helical membrane-spanning segment; that stretch reads FEVFDAAIVVISFIIDIVYIS. The Extracellular segment spans residues 149–155; it reads REDIFNA. A helical membrane pass occupies residues 156–176; it reads VGLLILLRLWRVARIVNGIIV. Positions 177 to 226 form a coiled coil; that stretch reads SVKTQAEDKIHRLKENQESLLEKVAHLEQQCAQQEQEIVRLQTLLQQHNV. Topologically, residues 177 to 230 are cytoplasmic; sequence SVKTQAEDKIHRLKENQESLLEKVAHLEQQCAQQEQEIVRLQTLLQQHNVFPAS.

The protein belongs to the hydrogen channel family. As to quaternary structure, homodimer.

The protein localises to the membrane. Its subcellular location is the cell membrane. Mediates the voltage-dependent proton permeability of excitable membranes. Forms a proton-selective channel through which protons may pass in accordance with their electrochemical gradient. The protein is Voltage-gated hydrogen channel 1 (hvcn1) of Xenopus tropicalis (Western clawed frog).